The primary structure comprises 65 residues: MNVKILVLVAVLCLVVSTHAERHSKTDMEDSPMIQERKCLPPGKPCYGATQKIPCCGVCSHNNCT.

Positions 1 to 20 (MNVKILVLVAVLCLVVSTHA) are cleaved as a signal peptide. A propeptide spanning residues 21–37 (ERHSKTDMEDSPMIQER) is cleaved from the precursor. 3 disulfide bridges follow: cysteine 39-cysteine 56, cysteine 46-cysteine 59, and cysteine 55-cysteine 64.

The protein belongs to the neurotoxin 36 family. 02 subfamily. In terms of tissue distribution, expressed by the venom gland.

The protein localises to the secreted. Functionally, reversibly blocks N-type calcium channels (Cav2.2/CACNA1B) in rat dorsal root ganglion cells. Elicits no toxic symptoms in either vertebrates or invertebrates during a period of 48 hours post-injection, when it was assayed in vivo by direct injection into mice and cockroaches. This Cyriopagopus hainanus (Chinese bird spider) protein is Hainantoxin-X.2.